The chain runs to 572 residues: Outer spore wall assembly protein SHE10 (572 aa).

The signal sequence occupies residues 1 to 19 (MRAISKLFVFTVLVLGSLQ). Coiled-coil stretches lie at residues 351–372 (SQANDELANITNHIRAELREVV) and 485–510 (FQEREKNDRLREQHEQEAREMTLREQ). The disordered stretch occupies residues 539 to 572 (STSWSVPPADARAEPASGSPIQQAASEAAQQPSV). The segment covering 560 to 572 (QQAASEAAQQPSV) has biased composition (low complexity).

It belongs to the SHE10 family. Component of the mitochondria-localized RNase mitochondrial RNA-processing (RNase MRP) composed of one single RNA encoded by the NME1 gene and at least 31 proteins. Absent in the nucleus-localized RNase MRP (NuMRP).

It is found in the mitochondrion. In terms of biological role, involved in spore wall assembly. May be a component of the mitochondrial RNase MRP (MtMRP), a ribonucleoprotein endoribonuclease involved in the cleaving RNA transcripts to generate primers for DNA replication in mitochondria. This is Outer spore wall assembly protein SHE10 from Eremothecium gossypii (strain ATCC 10895 / CBS 109.51 / FGSC 9923 / NRRL Y-1056) (Yeast).